The following is a 354-amino-acid chain: Protein-arginine kinase (354 aa).

The Phosphagen kinase C-terminal domain occupies 24–254 (IVLSSRIRLA…QQIIQQEKMA (231 aa)). ATP-binding positions include 27–31 (SSRIR), His92, Arg125, 176–180 (RASVM), and 207–212 (RGIYGE). The RDXXRA motif of the pArg binding pocket involved in allosteric regulation motif lies at 337 to 342 (RDYRRA).

The protein belongs to the ATP:guanido phosphotransferase family.

The catalysed reaction is L-arginyl-[protein] + ATP = N(omega)-phospho-L-arginyl-[protein] + ADP + H(+). Its activity is regulated as follows. Appears to be allosterically activated by the binding of pArg-containing polypeptides to the pArg-binding pocket localized in the C-terminal domain of McsB. Catalyzes the specific phosphorylation of arginine residues in a large number of proteins. Is part of the bacterial stress response system. Protein arginine phosphorylation has a physiologically important role and is involved in the regulation of many critical cellular processes, such as protein homeostasis, motility, competence, and stringent and stress responses, by regulating gene expression and protein activity. This is Protein-arginine kinase from Bacillus cereus (strain G9842).